The sequence spans 243 residues: MRTIRLDIEYDGTDFAGWQRQSGTIPTVQGTIEKLLSQITQEEVLLNGAGRTDKGVHARQQVASCALHSSMELSRLAHSLNCLLPPTIRICNAVHVTDDFHARFSATERTYRYFVSETPSALCNRFTGCANALLDVGVMQQMAAMVVGEHDFTAFSREERDSPAKRCKVTSCRWHRLHGMVVLQISANRFLRSMVRYLVHAMLQGGKGRLAPTLFQDMVESGTSSYRMVAAPASGLFLWRIGY.

Asp53 functions as the Nucleophile in the catalytic mechanism. Position 111 (Tyr111) interacts with substrate.

The protein belongs to the tRNA pseudouridine synthase TruA family. As to quaternary structure, homodimer.

The enzyme catalyses uridine(38/39/40) in tRNA = pseudouridine(38/39/40) in tRNA. Formation of pseudouridine at positions 38, 39 and 40 in the anticodon stem and loop of transfer RNAs. In Chlorobium chlorochromatii (strain CaD3), this protein is tRNA pseudouridine synthase A.